Consider the following 369-residue polypeptide: MHENFDKRLELLLEGLSLTRRFLFDPEEKETELKNLEQLSIQDSFWDDVSRAGRISEKIARLKQQLLEYNELKNKINSIKFFLEDEESSKDLEIQKELEKEFIFCEKKIAEWETLRLLAGELDRNSCFLSINAGAGGTESCDWVEMLFRMYSRWANSHGWKVEVIDRLDGEVAGIKHITLKLIGEYAYGYAKAESGVHRLVRISPFDSNAKRHTSFASVEVFPEIDDKIEVEIRPGDIRIDTYRSSGAGGQHVNVTDSAVRITHFPTGIVVSCQSERSQIQNREACMNMLRARIYQKLLQERLEKQNTNRKEKKEISWGSQIRNYVFQPYTLVKDVRTGYEVGNIQAMMDGELLDAFIKAYLADYGEIT.

The residue at position 251 (Q251) is an N5-methylglutamine.

This sequence belongs to the prokaryotic/mitochondrial release factor family. Methylated by PrmC. Methylation increases the termination efficiency of RF2.

The protein resides in the cytoplasm. Its function is as follows. Peptide chain release factor 2 directs the termination of translation in response to the peptide chain termination codons UGA and UAA. The chain is Peptide chain release factor 2 (prfB) from Chlamydia muridarum (strain MoPn / Nigg).